The sequence spans 211 residues: Putative truncated flagellar export/assembly protein LafU (211 aa).

One can recognise an OmpA-like domain in the interval Leu58–Ser176.

It belongs to the MotB family.

The polypeptide is Putative truncated flagellar export/assembly protein LafU (Escherichia coli (strain K12)).